Reading from the N-terminus, the 727-residue chain is Translation initiation factor IF-2, mitochondrial (727 aa).

The N-terminal 29 residues, 1–29 (MNQKLLKLENLLRFHTIYRQLHSLCQRRA), are a transit peptide targeting the mitochondrion. The 171-residue stretch at 178-348 (PRSPVVTIMG…VALAEMLELK (171 aa)) folds into the tr-type G domain. Residues 187-194 (GHVDHGKT) are G1. 187-194 (GHVDHGKT) is a binding site for GTP. A G2 region spans residues 212-216 (GITQH). GTP-binding positions include 234–237 (DTPG) and 288–291 (NKCD). The interval 234–237 (DTPG) is G3. The interval 288–291 (NKCD) is G4. Residues 324–326 (SAL) form a G5 region. Residue Thr688 is modified to Phosphothreonine.

It belongs to the TRAFAC class translation factor GTPase superfamily. Classic translation factor GTPase family. IF-2 subfamily. As to quaternary structure, monomer. As to expression, expressed in all tissues examined. Highest level in skeletal muscle.

Its subcellular location is the mitochondrion. Functionally, one of the essential components for the initiation of protein synthesis. Protects formylmethionyl-tRNA from spontaneous hydrolysis and promotes its binding to the 30S ribosomal subunits. Also involved in the hydrolysis of GTP during the formation of the 70S ribosomal complex. In Homo sapiens (Human), this protein is Translation initiation factor IF-2, mitochondrial (MTIF2).